The following is an 876-amino-acid chain: MASFPEADFQVCPLCKEMCGSPAPLSSNSSTSSSSSQTSGSSGGGGSSCGGAARRLHVLPCLHAFCRQCLEAQRHPAAGDALKLRCPICDQKVVISEPSGMDALPSSNFLLSNLLDVVVVAAAADEQKNGRAAGSGPAAGSGAGGGGANNRHHGRPPPHRAAAAASSPAAGSAAPSASSSSSSGGGGPAALLLRRPHSRQGEPRCSSCDEGNAASSRCLDCQEHLCDNCVRAHQRVRLTKDHFIERFAAGPAAASAGPAAPLALSPPYPASPYNILSVFPERASYCQHHDDEVLHFYCDTCSVPICRECTMGRHVGHSFIYLQDALQDSRTLTIQLLADAQQGRQAIQLSIEQAQAVAEQVEMKAKVVQSEVKAVTTRHKKALEERECELLWKVEKIRQVKAKSLYLQVEKLRQNLNKLDNTISAVQQVLEEGRTIDILLARDRMLAQVQELKNVRGLLQPQEDDRIMFTPPDQALYMAIKSMGFVSSGAFAPLTKATGEGLKRALQGKVASFTVIGYDHDGEPRLSGGDMISAVVMGPDGNLFGADVSDQQNGTYLVSYRPQLEGEHLVSVMMCNQHIENSPFKVVVKSGRSYIGIGLPGLSFGSEGDSDGKLCRPWGVSVDKEGYIIVADRSNNRIQVFKPCGTFHHKFGTLGSRPGQFDRPAGVACDVSRRIVVADKDNHRIQIFTFEGQFILKFGEKGTKNGQFNYPWDVAVNAEGKILVSDTRNHRVQLFGPDGVFLNKYGFEGALWKHFDSPRGVTFNHEGHLVVTDFNNHRLLVIHADCQSARFLGSEGSGNGQFLRPQGVAVDQEGRIIVADSRNHRVQIFESNGSFLCKFGAQGSGFGQMDRPSGIAVTPDGMIVVVDFGNNRILVF.

The RING-type zinc-finger motif lies at 12 to 90 (CPLCKEMCGS…ALKLRCPICD (79 aa)). The span at 26–40 (SSNSSTSSSSSQTSG) shows a compositional bias: low complexity. Disordered regions lie at residues 26 to 46 (SSNS…GGGG) and 128 to 192 (KNGR…AALL). Over residues 137–148 (PAAGSGAGGGGA) the composition is skewed to gly residues. Residues 160–182 (RAAAAASSPAAGSAAPSASSSSS) show a composition bias toward low complexity. Residues 200–247 (QGEPRCSSCDEGNAASSRCLDCQEHLCDNCVRAHQRVRLTKDHFIERF) form a B box-type 1; atypical zinc finger. Cysteine 205, cysteine 208, cysteine 229, histidine 233, cysteine 286, histidine 289, cysteine 309, and histidine 314 together coordinate Zn(2+). The B box-type 2 zinc-finger motif lies at 281–322 (ERASYCQHHDDEVLHFYCDTCSVPICRECTMGRHVGHSFIYL). 2 coiled-coil regions span residues 344–373 (RQAI…SEVK) and 399–434 (QVKA…EEGR). The stretch at 487-588 (SSGAFAPLTK…IENSPFKVVV (102 aa)) is one Filamin repeat. NHL repeat units lie at residues 601-644 (GLSF…FKPC), 648-691 (HHKF…FTFE), 695-738 (ILKF…FGPD), 742-785 (LNKY…IHAD), 789-832 (ARFL…FESN), and 836-876 (LCKF…ILVF).

This sequence belongs to the TRIM/RBCC family.

The protein localises to the cytoplasm. It is found in the P-body. The enzyme catalyses S-ubiquitinyl-[E2 ubiquitin-conjugating enzyme]-L-cysteine + [acceptor protein]-L-lysine = [E2 ubiquitin-conjugating enzyme]-L-cysteine + N(6)-ubiquitinyl-[acceptor protein]-L-lysine.. The protein operates within protein modification; protein ubiquitination. Its function is as follows. E3 ubiquitin-protein ligase that cooperates with the microRNAs (miRNAs) machinery and promotes embryonic stem cells proliferation and maintenance. Binds to miRNAs and participates in post-transcriptional repression of transcripts. Required to maintain proliferation and prevent premature differentiation of neural progenitor cells during early neural development. In Gallus gallus (Chicken), this protein is E3 ubiquitin-protein ligase TRIM71 (TRIM71).